Here is a 166-residue protein sequence, read N- to C-terminus: Large ribosomal subunit protein eL14 (166 aa).

The segment at 135 to 166 is disordered; the sequence is KADGTPRVLKKDRRERLRAEKAKGGKKAAAKK. A compositionally biased stretch (basic and acidic residues) spans 146 to 157; sequence DRRERLRAEKAK.

This sequence belongs to the eukaryotic ribosomal protein eL14 family.

The chain is Large ribosomal subunit protein eL14 (RpL14) from Drosophila melanogaster (Fruit fly).